Consider the following 357-residue polypeptide: Dual-specificity RNA methyltransferase RlmN (357 aa).

Residue glutamate 89 is the Proton acceptor of the active site. The Radical SAM core domain occupies 109-340; that stretch reads EREKYTVCVS…CTIRESKALD (232 aa). Cysteine 116 and cysteine 345 are joined by a disulfide. 3 residues coordinate [4Fe-4S] cluster: cysteine 123, cysteine 127, and cysteine 130. S-adenosyl-L-methionine-binding positions include 173–174, serine 203, 226–228, and asparagine 302; these read GE and SLH. Residue cysteine 345 is the S-methylcysteine intermediate of the active site.

The protein belongs to the radical SAM superfamily. RlmN family. [4Fe-4S] cluster is required as a cofactor.

The protein resides in the cytoplasm. It carries out the reaction adenosine(2503) in 23S rRNA + 2 reduced [2Fe-2S]-[ferredoxin] + 2 S-adenosyl-L-methionine = 2-methyladenosine(2503) in 23S rRNA + 5'-deoxyadenosine + L-methionine + 2 oxidized [2Fe-2S]-[ferredoxin] + S-adenosyl-L-homocysteine. The enzyme catalyses adenosine(37) in tRNA + 2 reduced [2Fe-2S]-[ferredoxin] + 2 S-adenosyl-L-methionine = 2-methyladenosine(37) in tRNA + 5'-deoxyadenosine + L-methionine + 2 oxidized [2Fe-2S]-[ferredoxin] + S-adenosyl-L-homocysteine. Functionally, specifically methylates position 2 of adenine 2503 in 23S rRNA and position 2 of adenine 37 in tRNAs. m2A2503 modification seems to play a crucial role in the proofreading step occurring at the peptidyl transferase center and thus would serve to optimize ribosomal fidelity. In Helicobacter pylori (strain ATCC 700392 / 26695) (Campylobacter pylori), this protein is Dual-specificity RNA methyltransferase RlmN.